The sequence spans 1159 residues: MGDQFDSLMERIRVRQAEMSGEGEVAKENGPVTSKITSVKQEVASPTKVFGSSSKCNDGPSTPVHFHPQEPKETTPNMKENAENSLNSFKDATVNESSSKKTSRFSMLAQEIDEYEYDYQSQYNKPKEAYMKGRSPRMSIGETRPAVLCTPAGAQAMKSPNVAVSSKSAPEIALGMSDFEARRIKFAQPIVNVNYLPNESSIFSGGSGSSVNDQSTVLGGSAEMMNVTTSSLSCGELSMNQHITHENTIINAQSCDNREAILRERQQVSNEEYGPHTFMRKKVPKEASSATSSSSSTTTLTTISGASGSTTSGISNAPQDSASTKTTTNTFTSSYLLTKTSNNNINALVSSSPKPFSKDIGRSMFSPVHFTPKSTSSPKTLSESIFSPSKSAAVEGSIATTRRLQFEEKLKKSSSANVTAPPAPTSAPVPTPRHVAPLAPTVAQQSHLTPNHRHAAQQKKHLFPVVGIVATAPIPVQTQWRGQSNTPVVQGARADEKTAGNEPPVGAGVGKLKNLKSRWEFSSATGTPIHPDATEDSLIATAIKMKESAIPKQLGHRSERKGPSASSLYSQGARSNTASPASKSTRYEQEEEDDVFEAPEFNDGGDVISEDGILQEEEEDTSKFIDNAFGFMEGSGAGTPSPYREPPLQRLEKNRPPAEVIEEETENEDESEPYEPEEEEDDDATTQFPVPERSRKSSSQLAYSVSFYRKIQRDRNEESSTVLAGPVISQISPSAPPMSSSLTSQQKLRQLTTGPANGARIVESAKDAHDRIKRAIQVEEQLVAQSKRAMILARDKPSFRGSREEFEAQWAMLRHVEKHRALLTEYDRLKRDGPRIIDGPRGTITVSQLSVNMARDYVSANIASSKKSDEVFYFAAILRYGEQVDVSKMVTSDGGLNRRGVLEFPVPLMLTGIPPDFRATVEIYGQRSMRESTSHEDKYKLKNSTFKAKTRNTFLGGGSTSSANQSLFVDPAASSSSTSSTTSNFNLLGTFSFDINCPGKHLYNMSHTVYPLEGITQMKVRKQAIDGADITYHGFLSMYQRTGEGLGSWTRYWCALENGEMKFWKQPEDEGTKGYTALMDLSTCCRSEGASVVEDICPFPNSFHIDVWAPKMDTSDPRGIERLRVMLAADTAQDLQTWLSLINSTSKQLCTWRNPIVNQ.

Disordered stretches follow at residues 43–81, 266–327, 409–430, 549–608, and 629–699; these read VASP…MKEN, QQVS…TKTT, KLKK…APVP, AIPK…GDVI, and FGFM…KSSS. Positions 50-60 are enriched in polar residues; sequence FGSSSKCNDGP. Over residues 287–327 the composition is skewed to low complexity; that stretch reads ASSATSSSSSTTTLTTISGASGSTTSGISNAPQDSASTKTT. The span at 421–430 shows a compositional bias: pro residues; it reads PPAPTSAPVP. Positions 564–584 are enriched in polar residues; that stretch reads SASSLYSQGARSNTASPASKS. The span at 660–684 shows a compositional bias: acidic residues; it reads VIEEETENEDESEPYEPEEEEDDDA. In terms of domain architecture, PH spans 1029–1147; sequence DITYHGFLSM…WLSLINSTSK (119 aa).

As to expression, strongly expressed in dividing neuroblasts under the ventral epidermal cells during ventral enclosure.

The protein localises to the cytoplasm. It localises to the cell cortex. Its subcellular location is the cytoskeleton. It is found in the spindle. The protein resides in the midbody. The protein localises to the cleavage furrow. Its function is as follows. Required for contractile events in embryos that occur prior to mitosis, such as cortical ruffling and pseudocleavage. Promotes membrane ruffling by organizing cortical patches of septins and myosin II. Not generally required for cytokinesis in mitotic cells. Required for the asymmetric cleavage events that extrude the two polar bodies during oocyte meiosis. Not required for meiotic contractile ring assembly, initiation or closure but is required for the transformation of the contractile ring from a disk above the spindle to a tube around the spindle midzone. Promotes astral microtubule-directed cortical myosin polarization and cleavage furrow ingression. Regulates neuroblast cytokinesis during mid- to late-embryogenesis and is required for ventral enclosure. This Caenorhabditis elegans protein is Anillin-like protein 1 (ani-1).